The primary structure comprises 639 residues: MAU2 chromatid cohesion factor homolog (639 aa).

2 TPR repeats span residues 453 to 486 and 493 to 526; these read GGFY…ANAE and SCSL…ASKI.

The protein belongs to the SCC4/mau-2 family. As to quaternary structure, interacts with Nipped-B to form the cohesin loading complex.

It is found in the nucleus. It localises to the nucleoplasm. Its function is as follows. Required for association of the cohesin complex with chromatin during interphase. Plays a role in sister chromatid cohesion and normal progression through prometaphase. The sequence is that of MAU2 chromatid cohesion factor homolog from Drosophila ananassae (Fruit fly).